The sequence spans 143 residues: Large ribosomal subunit protein uL11 (143 aa).

Belongs to the universal ribosomal protein uL11 family. In terms of assembly, part of the ribosomal stalk of the 50S ribosomal subunit. Interacts with L10 and the large rRNA to form the base of the stalk. L10 forms an elongated spine to which L12 dimers bind in a sequential fashion forming a multimeric L10(L12)X complex. Post-translationally, one or more lysine residues are methylated.

Forms part of the ribosomal stalk which helps the ribosome interact with GTP-bound translation factors. This is Large ribosomal subunit protein uL11 from Azoarcus sp. (strain BH72).